The following is a 378-amino-acid chain: D-alanine--D-alanine ligase (378 aa).

The region spanning 141–347 (KKLLTLNGIR…YSELIDQLIQ (207 aa)) is the ATP-grasp domain. 171–226 (AEELGETLFVKPARQGSSVGIHKVRNEEEYNAALEDGFKYDYKILVEEAIKNPREV) provides a ligand contact to ATP. Residues Asp-301, Glu-314, and Asn-316 each coordinate Mg(2+).

The protein belongs to the D-alanine--D-alanine ligase family. Requires Mg(2+) as cofactor. Mn(2+) serves as cofactor.

The protein localises to the cytoplasm. It catalyses the reaction 2 D-alanine + ATP = D-alanyl-D-alanine + ADP + phosphate + H(+). It functions in the pathway cell wall biogenesis; peptidoglycan biosynthesis. Its function is as follows. Cell wall formation. This Ligilactobacillus salivarius (strain UCC118) (Lactobacillus salivarius) protein is D-alanine--D-alanine ligase.